Reading from the N-terminus, the 314-residue chain is Methionyl-tRNA formyltransferase (314 aa).

113 to 116 contacts (6S)-5,6,7,8-tetrahydrofolate; it reads SLLP.

It belongs to the Fmt family.

It catalyses the reaction L-methionyl-tRNA(fMet) + (6R)-10-formyltetrahydrofolate = N-formyl-L-methionyl-tRNA(fMet) + (6S)-5,6,7,8-tetrahydrofolate + H(+). Functionally, attaches a formyl group to the free amino group of methionyl-tRNA(fMet). The formyl group appears to play a dual role in the initiator identity of N-formylmethionyl-tRNA by promoting its recognition by IF2 and preventing the misappropriation of this tRNA by the elongation apparatus. The sequence is that of Methionyl-tRNA formyltransferase from Stutzerimonas stutzeri (strain A1501) (Pseudomonas stutzeri).